The primary structure comprises 296 residues: MSLGAKPFGEKKFIEIKGRRMAYIDEGTGDPILFQHGNPTSSYLWRNIMPHCAGLGRLIACDLIGMGDSDKLDPSGPERYAYAEHRDYLDALWEALDLGDRVVLVVHDWGSALGFDWARRHRERVQGIAYMEAIAMPIEWADFPEQDRDLFQAFRSQAGEELVLQDNVFVEQVLPGLILRPLSEAEMAAYREPFLAAGEARRPTLSWPRQIPIAGTPADVVAIARDYAGWLSESPIPKLFINAEPGALTTGRMRDFCRTWPNQTEITVAGAHFIQEDSPDEIGAAIAAFVRRLRPA.

An AB hydrolase-1 domain is found at 31–155; sequence PILFQHGNPT…QDRDLFQAFR (125 aa). Asn-38 is a chloride binding site. Asp-108 serves as the catalytic Nucleophile. Trp-109 is a chloride binding site. The Proton donor role is filled by Glu-132. The active-site Proton acceptor is His-272.

This sequence belongs to the haloalkane dehalogenase family. Type 2 subfamily. In terms of assembly, monomer.

The protein localises to the periplasm. The enzyme catalyses 1-haloalkane + H2O = a halide anion + a primary alcohol + H(+). It carries out the reaction (3R,6R)-1,3,4,6-tetrachlorocyclohexa-1,4-diene + 2 H2O = 2,5-dichlorocyclohexa-2,5-dien-1,4-diol + 2 chloride + 2 H(+). Its pathway is xenobiotic degradation; gamma-hexachlorocyclohexane degradation. Competitively inhibited by the key pollutants 1,2-dichloroethane (1,2-DCE) and 1,2-dichloropropane (1,2-DCP). Its function is as follows. Catalyzes hydrolytic cleavage of carbon-halogen bonds in halogenated aliphatic compounds, leading to the formation of the corresponding primary alcohols, halide ions and protons. Has a broad substrate specificity since not only monochloroalkanes (C3 to C10) but also dichloroalkanes (&gt; C3), bromoalkanes, and chlorinated aliphatic alcohols are good substrates. Shows almost no activity with 1,2-dichloroethane, but very high activity with the brominated analog. Is involved in the degradation of the important environmental pollutant gamma-hexachlorocyclohexane (gamma-HCH or lindane) as it also catalyzes conversion of 1,3,4,6-tetrachloro-1,4-cyclohexadiene (1,4-TCDN) to 2,5-dichloro-2,5-cyclohexadiene-1,4-diol (2,5-DDOL) via the intermediate 2,4,5-trichloro-2,5-cyclohexadiene-1-ol (2,4,5-DNOL). This degradation pathway allows S.japonicum UT26 to grow on gamma-HCH as the sole source of carbon and energy. This Sphingobium indicum (strain DSM 16413 / CCM 7287 / MTCC 6362 / UT26 / NBRC 101211 / UT26S) (Sphingobium japonicum) protein is Haloalkane dehalogenase.